The following is a 257-amino-acid chain: 3-methyl-2-oxobutanoate hydroxymethyltransferase (257 aa).

Residues Asp-44 and Asp-83 each contribute to the Mg(2+) site. Residues 44 to 45, Asp-83, and Lys-113 each bind 3-methyl-2-oxobutanoate; that span reads DS. Glu-115 contacts Mg(2+). The active-site Proton acceptor is the Glu-182.

This sequence belongs to the PanB family. As to quaternary structure, homodecamer; pentamer of dimers. Mg(2+) is required as a cofactor.

It localises to the cytoplasm. It catalyses the reaction 3-methyl-2-oxobutanoate + (6R)-5,10-methylene-5,6,7,8-tetrahydrofolate + H2O = 2-dehydropantoate + (6S)-5,6,7,8-tetrahydrofolate. The protein operates within cofactor biosynthesis; (R)-pantothenate biosynthesis; (R)-pantoate from 3-methyl-2-oxobutanoate: step 1/2. Its function is as follows. Catalyzes the reversible reaction in which hydroxymethyl group from 5,10-methylenetetrahydrofolate is transferred onto alpha-ketoisovalerate to form ketopantoate. This chain is 3-methyl-2-oxobutanoate hydroxymethyltransferase, found in Rippkaea orientalis (strain PCC 8801 / RF-1) (Cyanothece sp. (strain PCC 8801)).